A 150-amino-acid polypeptide reads, in one-letter code: Sec-independent protein translocase protein TatB (150 aa).

The helical transmembrane segment at 1-21 (MFDLSWSEIALVGVVALIVIG) threads the bilayer. The segment covering 77-86 (KIDQAIDPDG) has biased composition (basic and acidic residues). A disordered region spans residues 77-150 (KIDQAIDPDG…RTDGSLPPQD (74 aa)). Pro residues predominate over residues 109-135 (AAPPSLPPQAPAQPVPPATGAAPPSPS).

It belongs to the TatB family. As to quaternary structure, the Tat system comprises two distinct complexes: a TatABC complex, containing multiple copies of TatA, TatB and TatC subunits, and a separate TatA complex, containing only TatA subunits. Substrates initially bind to the TatABC complex, which probably triggers association of the separate TatA complex to form the active translocon.

The protein localises to the cell inner membrane. Its function is as follows. Part of the twin-arginine translocation (Tat) system that transports large folded proteins containing a characteristic twin-arginine motif in their signal peptide across membranes. Together with TatC, TatB is part of a receptor directly interacting with Tat signal peptides. TatB may form an oligomeric binding site that transiently accommodates folded Tat precursor proteins before their translocation. This Rhodospirillum rubrum (strain ATCC 11170 / ATH 1.1.1 / DSM 467 / LMG 4362 / NCIMB 8255 / S1) protein is Sec-independent protein translocase protein TatB.